A 137-amino-acid polypeptide reads, in one-letter code: Phosphoribosyl-AMP cyclohydrolase (137 aa).

Aspartate 84 provides a ligand contact to Mg(2+). Cysteine 85 lines the Zn(2+) pocket. Mg(2+) contacts are provided by aspartate 86 and aspartate 88. Residues cysteine 101 and cysteine 108 each coordinate Zn(2+).

It belongs to the PRA-CH family. In terms of assembly, homodimer. It depends on Mg(2+) as a cofactor. Requires Zn(2+) as cofactor.

The protein localises to the cytoplasm. It catalyses the reaction 1-(5-phospho-beta-D-ribosyl)-5'-AMP + H2O = 1-(5-phospho-beta-D-ribosyl)-5-[(5-phospho-beta-D-ribosylamino)methylideneamino]imidazole-4-carboxamide. Its pathway is amino-acid biosynthesis; L-histidine biosynthesis; L-histidine from 5-phospho-alpha-D-ribose 1-diphosphate: step 3/9. In terms of biological role, catalyzes the hydrolysis of the adenine ring of phosphoribosyl-AMP. This chain is Phosphoribosyl-AMP cyclohydrolase, found in Chlorobaculum tepidum (strain ATCC 49652 / DSM 12025 / NBRC 103806 / TLS) (Chlorobium tepidum).